Reading from the N-terminus, the 330-residue chain is NADH-quinone oxidoreductase subunit H (330 aa).

Helical transmembrane passes span Leu5 to Leu25, Ile44 to Leu64, Phe78 to Ile98, Val122 to Ala142, Val156 to Ile176, Ile192 to Phe212, Met240 to Ile260, Phe271 to Trp293, and Cys310 to Ile330.

Belongs to the complex I subunit 1 family. As to quaternary structure, NDH-1 is composed of 14 different subunits. Subunits NuoA, H, J, K, L, M, N constitute the membrane sector of the complex.

It localises to the cell inner membrane. The catalysed reaction is a quinone + NADH + 5 H(+)(in) = a quinol + NAD(+) + 4 H(+)(out). Functionally, NDH-1 shuttles electrons from NADH, via FMN and iron-sulfur (Fe-S) centers, to quinones in the respiratory chain. The immediate electron acceptor for the enzyme in this species is believed to be ubiquinone. Couples the redox reaction to proton translocation (for every two electrons transferred, four hydrogen ions are translocated across the cytoplasmic membrane), and thus conserves the redox energy in a proton gradient. This subunit may bind ubiquinone. The polypeptide is NADH-quinone oxidoreductase subunit H (Campylobacter curvus (strain 525.92)).